The chain runs to 130 residues: MFLLWCKELIVINTNPKRSDEPVWWSLFGAGGTWFAMITPITVLVLGILAPLGVIDAEALSYERVSSFATSIIGALFIIGTLALPMWHAMHRVHHGMHDLKFHTGVAGKIACYGFATIISALAVVFIFMI.

3 helical membrane-spanning segments follow: residues 35–55, 67–87, and 110–130; these read FAMI…LGVI, SFAT…LPMW, and IACY…IFMI.

This sequence belongs to the FrdD family. Part of an enzyme complex containing four subunits: a flavoprotein (FrdA), an iron-sulfur protein (FrdB), and two hydrophobic anchor proteins (FrdC and FrdD).

Its subcellular location is the cell inner membrane. Anchors the catalytic components of the fumarate reductase complex to the cell membrane, binds quinones. The sequence is that of Fumarate reductase subunit D from Vibrio cholerae serotype O1 (strain M66-2).